The following is a 61-amino-acid chain: Type IV secretion system protein PtlI homolog (61 aa).

The first 25 residues, 1–25 (MIHAHSNARLLRWAILAIAPATLGA), serve as a signal peptide directing secretion. A disordered region spans residues 29-61 (NGPPGLPYPDGKPLIPINTAAPEQGSSCQTRAP). Over residues 52–61 (QGSSCQTRAP) the composition is skewed to polar residues.

This is Type IV secretion system protein PtlI homolog (ptlI) from Bordetella bronchiseptica (strain ATCC BAA-588 / NCTC 13252 / RB50) (Alcaligenes bronchisepticus).